The chain runs to 281 residues: MLNIGCHLSSSKGYKAMGKDAISINANTFQFFTRNPRGSKAKAMDLKDVEGLLQLMEENKFAKILAHAPYTLNPCSADERTREFAMEVLVDDLARMEYLPNNFYNFHPGNHLKQGVEVGIEYIVNSLNDVLKPDQTTTVLLETMSGKGTEIGKNFEELKQIIDGIKLSNKVGVCLDTCHVYDAGYDIVQDLDGVIQEFDRIIGLDKLYAIHLNDSKNPFASHKDRHAKIGEGYIGEEGIVRIINHPKLRHLPFFLETPNDLEGHGEEIKMLREAYRDESIL.

His67, His107, Glu142, Asp176, His179, His211, Asp224, His226, and Glu256 together coordinate Zn(2+).

It belongs to the AP endonuclease 2 family. The cofactor is Zn(2+).

The enzyme catalyses Endonucleolytic cleavage to 5'-phosphooligonucleotide end-products.. Endonuclease IV plays a role in DNA repair. It cleaves phosphodiester bonds at apurinic or apyrimidinic (AP) sites, generating a 3'-hydroxyl group and a 5'-terminal sugar phosphate. This chain is Probable endonuclease 4, found in Alkaliphilus oremlandii (strain OhILAs) (Clostridium oremlandii (strain OhILAs)).